The following is a 1095-amino-acid chain: Mediator of RNA polymerase II transcription subunit 15 (1095 aa).

The span at 66–83 shows a compositional bias: basic and acidic residues; it reads KSKIDAMRSTRDKRKRES. 6 disordered regions span residues 66–197, 265–323, 448–508, 633–672, 737–847, and 1050–1075; these read KSKI…LTQQ, QQQQ…RNPN, SAAD…LNPT, QQQQQQGMDPNRAQNSQQQQQQNQANMQQARNRKPTKNQT, PTMA…QPGN, and SEAAKGTNNSSLMDSGKEGSCKSMAG. Low complexity-rich tracts occupy residues 99–113 and 133–154; these read NNNNNNNNNNNNNLN and NSNANTNLNTNVGPGVNGPNGN. The segment covering 155 to 165 has biased composition (polar residues); that stretch reads DGTANPQMFMN. The span at 166–178 shows a compositional bias: low complexity; sequence QQAQARQQAAARQ. Over residues 448–473 the composition is skewed to polar residues; the sequence is SAADSTMNNSNQPMNIGNNGVNMIPN. 3 stretches are compositionally biased toward low complexity: residues 487 to 500, 633 to 662, and 780 to 793; these read QTPQQPQQRIQSNR, QQQQQQGMDPNRAQNSQQQQQQNQANMQQA, and PTPQVVPATVPSTT. 3 stretches are compositionally biased toward polar residues: residues 794–810, 817–847, and 1050–1062; these read NLSAAGTPNIRNKSATP, PKSTIRSNSNTALASAKTPSPMTVSIPQPGN, and SEAAKGTNNSSLM.

The protein belongs to the Mediator complex subunit 15 family. As to quaternary structure, component of the Mediator complex.

It localises to the nucleus. Its function is as follows. Component of the Mediator complex, a coactivator involved in regulated gene transcription of nearly all RNA polymerase II-dependent genes. Mediator functions as a bridge to convey information from gene-specific regulatory proteins to the basal RNA polymerase II transcription machinery. Mediator is recruited to promoters by direct interactions with regulatory proteins and serves as a scaffold for the assembly of a functional preinitiation complex with RNA polymerase II and the general transcription factors. This Candida glabrata (strain ATCC 2001 / BCRC 20586 / JCM 3761 / NBRC 0622 / NRRL Y-65 / CBS 138) (Yeast) protein is Mediator of RNA polymerase II transcription subunit 15 (GAL11).